The chain runs to 375 residues: Pulmonary surfactant-associated protein D (375 aa).

The signal sequence occupies residues 1–21 (MLLFLLSALVLLTQSLGYLEA). S-nitrosocysteine occurs at positions 35 and 40. The segment at 43 to 221 (VESGLPGRDG…DKGAKGESGL (179 aa)) is disordered. Positions 46 to 222 (GLPGRDGRDG…KGAKGESGLP (177 aa)) constitute a Collagen-like domain. Positions 50-65 (RDGRDGREGPRGEKGD) are enriched in basic and acidic residues. Position 78 is a 4-hydroxyproline (proline 78). Lysine 87 carries the 5-hydroxylysine modification. Asparagine 90 carries N-linked (GlcNAc...) asparagine glycosylation. Proline 96 is modified (4-hydroxyproline). 5-hydroxylysine is present on lysine 99. The segment covering 105 to 114 (SGPPGPPGVP) has biased composition (pro residues). 2 stretches are compositionally biased toward low complexity: residues 116-132 (PAGR…IGPQ) and 138-150 (KGEA…VGAP). 2 positions are modified to 4-hydroxyproline: proline 171 and proline 177. Low complexity predominate over residues 173-189 (ERGAPGNAGAAGSAGVM). A compositionally biased stretch (basic and acidic residues) spans 204 to 216 (KGDKGVPGDKGAK). Positions 223–251 (DVASLRQQVEALQKQVQHLQAAFSQYKKV) form a coiled coil. The 115-residue stretch at 260 to 374 (VGEKIFKTAG…CGEKRLVVCE (115 aa)) folds into the C-type lectin domain. Disulfide bonds link cysteine 281/cysteine 373 and cysteine 351/cysteine 365.

It belongs to the SFTPD family. Oligomeric complex of 4 set of homotrimers. Post-translationally, hydroxylation on proline residues within the sequence motif, GXPG, is most likely to be 4-hydroxy as this fits the requirement for 4-hydroxylation in vertebrates. In terms of processing, S-nitrosylation at Cys-35 and Cys-40 alters the quaternary structure which results in a pro-inflammatory chemoattractive signaling activity with macrophages.

The protein resides in the secreted. It is found in the extracellular space. It localises to the extracellular matrix. Its subcellular location is the surface film. Functionally, contributes to the lung's defense against inhaled microorganisms, organic antigens and toxins. Interacts with compounds such as bacterial lipopolysaccharides, oligosaccharides and fatty acids and modulates leukocyte action in immune response. May participate in the extracellular reorganization or turnover of pulmonary surfactant. Binds strongly maltose residues and to a lesser extent other alpha-glucosyl moieties. The sequence is that of Pulmonary surfactant-associated protein D (SFTPD) from Macaca mulatta (Rhesus macaque).